Consider the following 671-residue polypeptide: Putative glycoside hydrolase BT_3595 (671 aa).

A signal peptide spans Met-1–Ala-24.

This sequence belongs to the glycoside hydrolase-like 3 (GHL3) family.

This Bacteroides thetaiotaomicron (strain ATCC 29148 / DSM 2079 / JCM 5827 / CCUG 10774 / NCTC 10582 / VPI-5482 / E50) protein is Putative glycoside hydrolase BT_3595.